The sequence spans 323 residues: tRNA-dihydrouridine(16) synthase (323 aa).

FMN-binding positions include 7 to 9 and Gln-68; that span reads PME. The Proton donor role is filled by Cys-98. FMN contacts are provided by residues Lys-139, 200 to 202, and 224 to 225; these read NGE and CR.

Belongs to the Dus family. DusC subfamily. The cofactor is FMN.

It catalyses the reaction 5,6-dihydrouridine(16) in tRNA + NADP(+) = uridine(16) in tRNA + NADPH + H(+). It carries out the reaction 5,6-dihydrouridine(16) in tRNA + NAD(+) = uridine(16) in tRNA + NADH + H(+). Its function is as follows. Catalyzes the synthesis of 5,6-dihydrouridine (D), a modified base found in the D-loop of most tRNAs, via the reduction of the C5-C6 double bond in target uridines. Specifically modifies U16 in tRNAs. The protein is tRNA-dihydrouridine(16) synthase of Vibrio cholerae serotype O1 (strain ATCC 39315 / El Tor Inaba N16961).